A 195-amino-acid chain; its full sequence is HTH-type transcriptional regulator BetI (195 aa).

Positions 8 to 68 constitute an HTH tetR-type domain; that stretch reads PIRRQQLIEA…ATMRYLISHL (61 aa). A DNA-binding region (H-T-H motif) is located at residues 31–50; the sequence is SIVQIARRAGVSNGIISHYF.

It participates in amine and polyamine biosynthesis; betaine biosynthesis via choline pathway [regulation]. In terms of biological role, repressor involved in the biosynthesis of the osmoprotectant glycine betaine. It represses transcription of the choline transporter BetT and the genes of BetAB involved in the synthesis of glycine betaine. The chain is HTH-type transcriptional regulator BetI from Pectobacterium atrosepticum (strain SCRI 1043 / ATCC BAA-672) (Erwinia carotovora subsp. atroseptica).